The following is a 1390-amino-acid chain: MEVLMAERADLVFHNKAIDGTAMKRLISRLIDHFGMAYTSHILDQVKTLGFQQATATSISLGIDDLLTIPSKGWLVQDAEQQSLTLEKNHHYGNVHAVEKLRQSIEIWYATSEYLRQEMNPNFRMTDPSNPVHIMSFSGARGNASQVHQLVGMRGLMSDPQGQMIDLPIQSNLREGLSLTEYIISCYGARKGVVDTAVRTSDAGYLTRRLVEVVQHIVVRRTDCGTIRRISVSPQNGMTEKIFIQTLIGRVLADDIYIGPRCIATRNQDIGIGLINRFITFRAQPIYIRTPFTCRSTSWICRLCYGRSPTHGDLVELGEAVGIIAGQSIGEPGTQLTLRTFHTGGVFTGGTAEHVRAPSNGKIKFNEDLVHPTRTRHGHPAFLCYIDLYVTIESQSIIHNVNIPPKSLILVQNDQYVESEQVIAEIRTGASTFHFKERVRKHIYSDSQGEMHWSTDVYHAPEYTYGNVHLLPKTSHLWILSGGPCRSSIVPFSIQKDQDQINVNSLFVEQRYISDLSVTNDRVRHKIFSSDPSGQKGGRIFDYDSGPDRIVSNSQFLYPAIPHENSDLLAKRRRNRFLIPFQYDQEQEKELMCPYGISTEIPINGILRRNSILAYFDDPRYRRSSSGITKYATIEVDSIVKKEDLIEYRGSKEFRPKYQTKVDRFFFIPEEVHILPGSSSIMVRNNSIIGVDTRITLNIRSRVGGLVRVERKKKRIELKIFSGDIHFPGETDKISRHSGILIPPGVVKKNSKKSKKKWKNWIYIQRITPTKKKYFVSVRPVVTYEIADGINLPTLFPQDLLQERDNMQLQVVNYIISGNGKPSRGIPQTSIQLVRTCLVLNWDQDLKGSLEEIHASFVEVRTNDLIRDFIRIDLVKSPISYTGKRNDTWGSGLNPDSISDCTNINPFYSKARLPSFTQPKGTVRTLRNKEYQSLIILSSSDCYQIGPFKDSKYNKTTNCHNITKELIKEDSPVPISNSLGPLGAVPKFLNFDSFSHLITHNQILLKKYLLLDNLKHTSQVMKYFLLDENGKIHNTDPCRNIFFNPSHLNWYSLHHDFFYETPITISLGQFICENVYIFEYGPHIKSGQVLIVQFDSLVIRSAKPHLATPGATVHGHYGEILYEGDTLVTFIYEKSRSGDITQGLPKVEQVLEVRSIDSISLNLEKRVEGWNERVTRILGIPWGFLIGAELTIAQSCISLVNKIQKVYRSQGVQIHNRHIEIVVRQITSKVLVSEDGMSNVFSPGELIGLLRAERTGRALEEAIRYRAILVGITRASLNTQSFISEASFQETARVLAKAALRGRIDWLKGLKENVVLGGMIPVGTGFKGLVHHSRQHNNIPLEIKKRNLFEFEGEMGDILFHHRQSFGSCIQKTFHETSEQSFGFGRFNDS.

Zn(2+)-binding residues include cysteine 224, cysteine 294, cysteine 301, and cysteine 304.

This sequence belongs to the RNA polymerase beta' chain family. RpoC2 subfamily. As to quaternary structure, in plastids the minimal PEP RNA polymerase catalytic core is composed of four subunits: alpha, beta, beta', and beta''. When a (nuclear-encoded) sigma factor is associated with the core the holoenzyme is formed, which can initiate transcription. Requires Zn(2+) as cofactor.

It is found in the plastid. Its subcellular location is the chloroplast. It carries out the reaction RNA(n) + a ribonucleoside 5'-triphosphate = RNA(n+1) + diphosphate. DNA-dependent RNA polymerase catalyzes the transcription of DNA into RNA using the four ribonucleoside triphosphates as substrates. In Ceratophyllum demersum (Rigid hornwort), this protein is DNA-directed RNA polymerase subunit beta''.